A 215-amino-acid polypeptide reads, in one-letter code: Wtf element wtf7 (215 aa).

Residues 1-21 form a disordered region; that stretch reads MSGSYAPIEDSADELSVHSGN. Transmembrane regions (helical) follow at residues 119–139, 149–169, and 189–209; these read LAQS…CLFF, LMGW…SFIL, and LILF…YALY.

Belongs to the WTF family.

The protein localises to the spore membrane. Functionally, may act in meiotic drive. The polypeptide is Wtf element wtf7 (Schizosaccharomyces pombe (strain 972 / ATCC 24843) (Fission yeast)).